Here is a 259-residue protein sequence, read N- to C-terminus: Deoxyribose-phosphate aldolase (259 aa).

The Proton donor/acceptor role is filled by D102. The active-site Schiff-base intermediate with acetaldehyde is the K167. The active-site Proton donor/acceptor is the K201.

This sequence belongs to the DeoC/FbaB aldolase family. DeoC type 2 subfamily.

It localises to the cytoplasm. The catalysed reaction is 2-deoxy-D-ribose 5-phosphate = D-glyceraldehyde 3-phosphate + acetaldehyde. It functions in the pathway carbohydrate degradation; 2-deoxy-D-ribose 1-phosphate degradation; D-glyceraldehyde 3-phosphate and acetaldehyde from 2-deoxy-alpha-D-ribose 1-phosphate: step 2/2. Functionally, catalyzes a reversible aldol reaction between acetaldehyde and D-glyceraldehyde 3-phosphate to generate 2-deoxy-D-ribose 5-phosphate. The polypeptide is Deoxyribose-phosphate aldolase (Escherichia coli O45:K1 (strain S88 / ExPEC)).